A 1472-amino-acid polypeptide reads, in one-letter code: Adhesion G protein-coupled receptor L1 (1472 aa).

The first 24 residues, 1–24 (MARLAAVLWSLCVTAILVTSATQG), serve as a signal peptide directing secretion. Over 25-857 (LSRAGLPFGL…EIYQGRINEL (833 aa)) the chain is Extracellular. Residues 40 to 129 (ACEGYPIELR…KYLEVQYDCV (90 aa)) form the SUEL-type lectin domain. Disulfide bonds link Cys41/Cys71, Cys50/Cys128, Cys83/Cys115, Cys96/Cys102, and Cys140/Cys322. Glu42 contributes to the alpha-L-rhamnose binding site. Residue Asn98 is glycosylated (N-linked (GlcNAc...) asparagine). 117–120 (GTYK) lines the alpha-L-rhamnose pocket. The region spanning 139–398 (VCPGTLQKVL…VVRYSLEFGP (260 aa)) is the Olfactomedin-like domain. Residues 400-468 (DPSAGPATSP…APAPSTRRPP (69 aa)) form a disordered region. The span at 405-441 (PATSPPLSTTTTARPTPLTSTASPAATTPLRRAPLTT) shows a compositional bias: low complexity. Positions 453 to 468 (DLPPATAPAPSTRRPP) are enriched in pro residues. 2 disulfides stabilise this stretch: Cys480-Cys515 and Cys503-Cys532. Residues Asn531, Asn640, Asn741, Asn800, Asn805, and Asn826 are each glycosylated (N-linked (GlcNAc...) asparagine). Residues 669 to 850 (PARFLAAKQN…AVLMAHREIY (182 aa)) form the GAIN-B domain. 2 disulfides stabilise this stretch: Cys801/Cys832 and Cys820/Cys834. A GPS region spans residues 801 to 850 (CSFWNYSERSMLGYWSTQGCRLVESNKTHTTCACSHLTNFAVLMAHREIY). The chain crosses the membrane as a helical span at residues 858 to 878 (LLSVITWVGIVISLVCLAICI). Residues 879 to 892 (STFCFLRGLQTDRN) lie on the Cytoplasmic side of the membrane. The helical transmembrane segment at 893–913 (TIHKNLCINLFLAELLFLVGI) threads the bilayer. At 914–919 (DKTQYE) the chain is on the extracellular side. The helical transmembrane segment at 920–940 (IACPIFAGLLHYFFLAAFSWL) threads the bilayer. Residues 941 to 963 (CLEGVHLYLLLVEVFESEYSRTK) are Cytoplasmic-facing. Residues 964-984 (YYYLGGYCFPALVVGIAAAID) traverse the membrane as a helical segment. The Extracellular segment spans residues 985-1001 (YRSYGTEKACWLRVDNY). The helical transmembrane segment at 1002–1022 (FIWSFIGPVSFVIVVNLVFLM) threads the bilayer. Topologically, residues 1023–1049 (VTLHKMVRSSSVLKPDSSRLDNIKSWA) are cytoplasmic. A helical membrane pass occupies residues 1050–1070 (LGAIALLFLLGLTWAFGLLFI). Residues 1071-1074 (NKES) lie on the Extracellular side of the membrane. A helical transmembrane segment spans residues 1075-1095 (VVMAYLFTTFNAFQGVFIFVF). Topologically, residues 1096-1472 (HCALQKKVHK…DGQMQLVTSL (377 aa)) are cytoplasmic. Residue Arg1193 is modified to Omega-N-methylarginine. Position 1219 is a phosphoserine (Ser1219). Disordered stretches follow at residues 1247–1271 (FNNS…PRGR), 1291–1325 (NLRG…GGPG), 1358–1427 (ESES…SRPP), and 1449–1472 (YLAA…VTSL). Composition is skewed to pro residues over residues 1301–1313 (GPPP…PPVP) and 1406–1418 (ALPP…PGPP). At Ser1471 the chain carries Phosphoserine.

The protein belongs to the G-protein coupled receptor 2 family. Adhesion G-protein coupled receptor (ADGR) subfamily. As to quaternary structure, forms a heterodimer, consisting of a large extracellular region (p120) non-covalently linked to a seven-transmembrane moiety (p85). Interacts with syntaxin and with proteins of the SHANK family via the PDZ domain. Interacts (via extracellular domain) with FLRT1, FLRT2 and FLRT3 (via extracellular domain). Autoproteolytically cleaved into 2 subunits, an extracellular subunit and a seven-transmembrane subunit. This proteolytic processing takes place early in the biosynthetic pathway, either in the endoplasmic reticulum or in the early compartment of the Golgi apparatus. In terms of tissue distribution, brain-specific expression but low levels are also detected in kidney, lung and spleen.

The protein localises to the cell membrane. Its subcellular location is the cell projection. It localises to the axon. It is found in the growth cone. The protein resides in the synapse. The protein localises to the presynaptic cell membrane. Its subcellular location is the synaptosome. Calcium-independent receptor of high affinity for alpha-latrotoxin, an excitatory neurotoxin present in black widow spider venom which triggers massive exocytosis from neurons and neuroendocrine cells. Receptor for TENM2 that mediates heterophilic synaptic cell-cell contact and postsynaptic specialization. Receptor probably implicated in the regulation of exocytosis. The sequence is that of Adhesion G protein-coupled receptor L1 from Bos taurus (Bovine).